The primary structure comprises 279 residues: MAFQGTSRTLTQQSSAASSGDLQKILFSPDAIKKMATECDLGRHHWMRADNAISVRPLVPQVTSNNLLSFFKSGYDAGELRSKGYMSVPQVLCAVTRTVSTDAEGSLKIYLADLGDKELSPIDGQCVTLHNHELPALISFQPTYDCPMELVGNRHRCFAVVVERHGYIGYGGTTASVCSNWQAQFSSKNNNYTHAAAGKTLVLPYNRLAEHSKPSAVARLLKSQLNNVSSSRYLLPNVALNQNAAGHESEILNESPPFAIGSPSASRNNSFRSQVVNGL.

It belongs to the cucumovirus movement protein family.

Its subcellular location is the host cell junction. It is found in the host plasmodesma. In terms of biological role, transports viral genome to neighboring plant cells directly through plasmosdesmata, without any budding. The movement protein allows efficient cell to cell propagation, by bypassing the host cell wall barrier. Acts by forming a tubular structure at the host plasmodesmata, enlarging it enough to allow free passage of virion capsids. This chain is Movement protein, found in Cucumber mosaic virus (strain Kin) (CMV).